The primary structure comprises 441 residues: 3-phosphoshikimate 1-carboxyvinyltransferase (441 aa).

Positions 26, 27, and 31 each coordinate 3-phosphoshikimate. A phosphoenolpyruvate-binding site is contributed by lysine 26. Positions 99 and 127 each coordinate phosphoenolpyruvate. 6 residues coordinate 3-phosphoshikimate: serine 173, serine 174, glutamine 175, serine 203, aspartate 320, and lysine 347. Glutamine 175 contacts phosphoenolpyruvate. The Proton acceptor role is filled by aspartate 320. Arginine 351, arginine 393, and lysine 423 together coordinate phosphoenolpyruvate.

It belongs to the EPSP synthase family. As to quaternary structure, monomer.

It localises to the cytoplasm. The catalysed reaction is 3-phosphoshikimate + phosphoenolpyruvate = 5-O-(1-carboxyvinyl)-3-phosphoshikimate + phosphate. It functions in the pathway metabolic intermediate biosynthesis; chorismate biosynthesis; chorismate from D-erythrose 4-phosphate and phosphoenolpyruvate: step 6/7. In terms of biological role, catalyzes the transfer of the enolpyruvyl moiety of phosphoenolpyruvate (PEP) to the 5-hydroxyl of shikimate-3-phosphate (S3P) to produce enolpyruvyl shikimate-3-phosphate and inorganic phosphate. The protein is 3-phosphoshikimate 1-carboxyvinyltransferase of Janthinobacterium sp. (strain Marseille) (Minibacterium massiliensis).